Here is a 150-residue protein sequence, read N- to C-terminus: 3-hydroxyacyl-[acyl-carrier-protein] dehydratase FabZ (150 aa).

H54 is an active-site residue.

The protein belongs to the thioester dehydratase family. FabZ subfamily.

The protein localises to the cytoplasm. It catalyses the reaction a (3R)-hydroxyacyl-[ACP] = a (2E)-enoyl-[ACP] + H2O. Its function is as follows. Involved in unsaturated fatty acids biosynthesis. Catalyzes the dehydration of short chain beta-hydroxyacyl-ACPs and long chain saturated and unsaturated beta-hydroxyacyl-ACPs. The chain is 3-hydroxyacyl-[acyl-carrier-protein] dehydratase FabZ from Vibrio campbellii (strain ATCC BAA-1116).